The primary structure comprises 276 residues: Undecaprenyl-diphosphatase (276 aa).

8 helical membrane-spanning segments follow: residues 1 to 21, 41 to 61, 97 to 117, 121 to 141, 155 to 175, 200 to 220, 231 to 251, and 256 to 276; these read MHWLEVVLLGVIQGLTEFLPV, LLLDICLHVGTLAAVLWVFFA, ALLIIIGTIPTGFIGMGFHKI, LFASPVLAGAMLLITGALLWA, VTWGNALTVGTIQGLAILPGI, FLLSIPAIVAALILEVADASA, LGGIVSAFTGLAALKWLLAIV, and LWWFAPYCWLVGATVLVANFV.

It belongs to the UppP family.

It localises to the cell inner membrane. It carries out the reaction di-trans,octa-cis-undecaprenyl diphosphate + H2O = di-trans,octa-cis-undecaprenyl phosphate + phosphate + H(+). Functionally, catalyzes the dephosphorylation of undecaprenyl diphosphate (UPP). Confers resistance to bacitracin. This is Undecaprenyl-diphosphatase from Desulfatibacillum aliphaticivorans.